An 856-amino-acid polypeptide reads, in one-letter code: V-type proton ATPase 116 kDa subunit a 2 (856 aa).

Over 1–393 (MGSLFRSETM…DAYGVGSYRE (393 aa)) the chain is Cytoplasmic. A helical membrane pass occupies residues 394–412 (VNPALFTIITFPFLFAVMF). Over 413–414 (GD) the chain is Vacuolar. The helical transmembrane segment at 415–431 (FGHGFVMFLFALLLVLN) threads the bilayer. Topologically, residues 432–445 (ENHPRLNQSQEIMR) are cytoplasmic. The helical transmembrane segment at 446–475 (MFFNGRYILLLMGLFSVYTGLIYNDCFSKS) threads the bilayer. The Vacuolar segment spans residues 476-549 (VNLFGSGWNV…ATNRLTFLNS (74 aa)). Residues N484 and N505 are each glycosylated (N-linked (GlcNAc...) asparagine). The chain crosses the membrane as a helical span at residues 550-569 (FKMKMSVILGIIHMTFGVIL). At 570-587 (GIFNHLHFRKKFNIYLVS) the chain is on the cytoplasmic side. A helical transmembrane segment spans residues 588–608 (IPELLFMLCIFGYLIFMIFYK). Over 609–651 (WLVFSAETSRVAPSILIEFINMFLFPASKTSGLYTGQEYVQRV) the chain is Vacuolar. A helical membrane pass occupies residues 652-671 (LLVVTALSVPVLFLGKPLFL). Residues 672–739 (LWLHNGRSCF…EILMTQVIHS (68 aa)) lie on the Cytoplasmic side of the membrane. S695 and S700 each carry phosphoserine. A helical membrane pass occupies residues 740-764 (IEYCLGCISNTASYLRLWALSLAHA). Residues 765 to 785 (QLSDVLWAMLMRVGLRVDTTY) lie on the Vacuolar side of the membrane. The helical transmembrane segment at 786–824 (GVLLLLPVIALFAVLTIFILLIMEGLSAFLHAIRLHWVE) threads the bilayer. The Cytoplasmic segment spans residues 825-856 (FQNKFYVGAGTKFVPFSFSLLSSKFNNDDSVA).

The protein belongs to the V-ATPase 116 kDa subunit family. V-ATPase is a heteromultimeric enzyme made up of two complexes: the ATP-hydrolytic V1 complex and the proton translocation V0 complex. The V1 complex consists of three catalytic AB heterodimers that form a heterohexamer, three peripheral stalks each consisting of EG heterodimers, one central rotor including subunits D and F, and the regulatory subunits C and H. The proton translocation complex V0 consists of the proton transport subunit a, a ring of proteolipid subunits c9c'', rotary subunit d, subunits e and f, and the accessory subunits ATP6AP1/Ac45 and ATP6AP2/PRR. Directly interacts with PSCD2 through its N-terminal cytosolic tail in an intra-endosomal acidification-dependent manner. Disruption of this interaction results in the inhibition of endocytosis. Interacts with SPAAR.

The protein localises to the cell membrane. It is found in the endosome membrane. Subunit of the V0 complex of vacuolar(H+)-ATPase (V-ATPase), a multisubunit enzyme composed of a peripheral complex (V1) that hydrolyzes ATP and a membrane integral complex (V0) that translocates protons. V-ATPase is responsible for acidifying and maintaining the pH of intracellular compartments and in some cell types, is targeted to the plasma membrane, where it is responsible for acidifying the extracellular environment. Essential component of the endosomal pH-sensing machinery. May play a role in maintaining the Golgi functions, such as glycosylation maturation, by controlling the Golgi pH. In aerobic conditions, involved in intracellular iron homeostasis, thus triggering the activity of Fe(2+) prolyl hydroxylase (PHD) enzymes, and leading to HIF1A hydroxylation and subsequent proteasomal degradation. In Homo sapiens (Human), this protein is V-type proton ATPase 116 kDa subunit a 2 (ATP6V0A2).